Here is a 198-residue protein sequence, read N- to C-terminus: Na(+)-translocating NADH-quinone reductase subunit E (198 aa).

The next 6 helical transmembrane spans lie at Ser-11–Val-31, Val-35–Ala-55, Phe-77–Ile-97, Gly-110–Val-130, Val-140–Leu-160, and Leu-176–Ile-196.

This sequence belongs to the NqrDE/RnfAE family. As to quaternary structure, composed of six subunits; NqrA, NqrB, NqrC, NqrD, NqrE and NqrF.

The protein localises to the cell inner membrane. The catalysed reaction is a ubiquinone + n Na(+)(in) + NADH + H(+) = a ubiquinol + n Na(+)(out) + NAD(+). Its function is as follows. NQR complex catalyzes the reduction of ubiquinone-1 to ubiquinol by two successive reactions, coupled with the transport of Na(+) ions from the cytoplasm to the periplasm. NqrA to NqrE are probably involved in the second step, the conversion of ubisemiquinone to ubiquinol. The sequence is that of Na(+)-translocating NADH-quinone reductase subunit E from Actinobacillus pleuropneumoniae serotype 5b (strain L20).